A 29-amino-acid chain; its full sequence is Myosin heavy chain, muscle (29 aa).

Over residues 1–16 (SKYESEGVARSEELQE) the composition is skewed to basic and acidic residues. The interval 1–29 (SKYESEGVARSEELQEVHQAFADAGRKPI) is disordered.

In terms of assembly, muscle myosin is a hexameric protein that consists of 2 heavy chain subunits (MHC), 2 alkali light chain subunits (MLC) and 2 regulatory light chain subunits (MLC-2).

The protein resides in the cytoplasm. It localises to the myofibril. Muscle contraction. This Bombyx mori (Silk moth) protein is Myosin heavy chain, muscle.